The chain runs to 102 residues: Large ribosomal subunit protein bL21 (102 aa).

This sequence belongs to the bacterial ribosomal protein bL21 family. In terms of assembly, part of the 50S ribosomal subunit. Contacts protein L20.

In terms of biological role, this protein binds to 23S rRNA in the presence of protein L20. The chain is Large ribosomal subunit protein bL21 from Sulfurimonas denitrificans (strain ATCC 33889 / DSM 1251) (Thiomicrospira denitrificans (strain ATCC 33889 / DSM 1251)).